We begin with the raw amino-acid sequence, 148 residues long: UPF0756 membrane protein NMC1845 (148 aa).

The next 4 helical transmembrane spans lie at 13-35 (LILLGVVSNNNSITISATILLLM), 50-70 (HGLNLGIILLTIGVLSPLVSG), 80-100 (FLNFKMISAVFIGIFVAWLAG), and 121-141 (VIGVAFMGGIPVGPLIAAGIL).

This sequence belongs to the UPF0756 family.

The protein localises to the cell membrane. The polypeptide is UPF0756 membrane protein NMC1845 (Neisseria meningitidis serogroup C / serotype 2a (strain ATCC 700532 / DSM 15464 / FAM18)).